A 149-amino-acid polypeptide reads, in one-letter code: MHCPFCGANDTKVIDSRLVADGHQVRRRRQCLACNERYTTFETAELVMPRVIKTDGNRDSFNEDKLRGGIQRALEKRPVSADDIERAINTIKSRLRATGEREVPSDMIGNLVMEALKELDKVAYIRFASVYRSFEDIREFGEEIAKLEK.

A zinc finger spans residues 3–34 (CPFCGANDTKVIDSRLVADGHQVRRRRQCLAC). Residues 49–139 (PRVIKTDGNR…VYRSFEDIRE (91 aa)) enclose the ATP-cone domain.

It belongs to the NrdR family. Zn(2+) serves as cofactor.

In terms of biological role, negatively regulates transcription of bacterial ribonucleotide reductase nrd genes and operons by binding to NrdR-boxes. This is Transcriptional repressor NrdR from Photobacterium profundum (strain SS9).